A 176-amino-acid polypeptide reads, in one-letter code: Large ribosomal subunit protein uL16 (176 aa).

This sequence belongs to the universal ribosomal protein uL16 family.

The sequence is that of Large ribosomal subunit protein uL16 from Thermoplasma volcanium (strain ATCC 51530 / DSM 4299 / JCM 9571 / NBRC 15438 / GSS1).